Consider the following 35-residue polypeptide: Bacteriocin SRCAM 1580 (35 aa).

Belongs to the bacteriocin class IIA/YGNGV family.

Its subcellular location is the secreted. Bacteriocin with antibacterial activity against C.jejuni. The chain is Bacteriocin SRCAM 1580 from Niallia circulans (Bacillus circulans).